A 1257-amino-acid polypeptide reads, in one-letter code: Probable aldehyde oxidase gad-3 (1257 aa).

One can recognise a 2Fe-2S ferredoxin-type domain in the interval 4 to 91 (TGIFFNVNGK…KTFVITVEGV (88 aa)). Residues cysteine 43, cysteine 48, cysteine 51, and cysteine 73 each coordinate [2Fe-2S] cluster. The region spanning 229–459 (LKGDRIELLL…TSLEVHIDAL (231 aa)) is the FAD-binding PCMH-type domain. Residue glutamate 1208 is the Proton acceptor of the active site.

This sequence belongs to the xanthine dehydrogenase family. [2Fe-2S] cluster is required as a cofactor. FAD serves as cofactor. Requires Mo-molybdopterin as cofactor.

The catalysed reaction is an aldehyde + O2 + H2O = a carboxylate + H2O2 + H(+). May be involved in the metabolism of 1-methylnicotinamide (MNA). Linked to regulation of longevity through generation of reactive oxygen species, where it probably functions in a pathway downstream of the sirtuin sir-2.1 and the nicotinamide N-methyltransferase anmt-1. The chain is Probable aldehyde oxidase gad-3 from Caenorhabditis elegans.